The following is a 376-amino-acid chain: Homeobox protein extradenticle (376 aa).

Residues 1–37 are disordered; it reads MEDPNRMLAHTGGMMAPQGYGLSGQDDGQNAGSENEV. One can recognise a PBC domain in the interval 38-237; sequence RKQKDIGEIL…VMILRSRFLD (200 aa). The interval 45-124 is PBC-A; the sequence is EILQQIMSIS…EGVAGPEKGG (80 aa). The PBC-B stretch occupies residues 127–237; that stretch reads AAAASAAAAS…VMILRSRFLD (111 aa). A DNA-binding region (homeobox; TALE-type) is located at residues 238–300; the sequence is ARRKRRNFSK…NKRIRYKKNI (63 aa). Positions 318-335 are enriched in low complexity; that stretch reads ASPYSMAGPPSGTTTPMM. A disordered region spans residues 318–376; it reads ASPYSMAGPPSGTTTPMMSPAPPQDSMGYPMGSGGYDQQQPYDNSMGGYDPNLHQDLSP.

The protein belongs to the TALE/PBX homeobox family. As to quaternary structure, interacts with Ubx and hth. As to expression, prior to full germband retraction it is ubiquitously present, after germband retraction, mostly present in the anterior portion of the ventral nerve cord.

The protein localises to the nucleus. Transcription factor which acts with the selector homeodomain proteins altering the regulation of downstream target genes such as wingless (wg), teashirt (tsh) and decapentaplegic (dpp), thus affecting segmental identity. Delimits the eye field and prevent inappropriate eye development. Required for proper localization of chordotonal organs within the peripheral nervous system. In Drosophila melanogaster (Fruit fly), this protein is Homeobox protein extradenticle (exd).